The primary structure comprises 211 residues: Glycerol-3-phosphate acyltransferase (211 aa).

The next 5 helical transmembrane spans lie at 10-30 (FTTW…FGLL), 63-83 (ALTL…IKFL), 90-110 (NIFI…PVWL), 126-146 (LGLY…LFLI), and 152-172 (LSAL…YPYL).

This sequence belongs to the PlsY family. In terms of assembly, probably interacts with PlsX.

The protein localises to the cell inner membrane. The catalysed reaction is an acyl phosphate + sn-glycerol 3-phosphate = a 1-acyl-sn-glycero-3-phosphate + phosphate. The protein operates within lipid metabolism; phospholipid metabolism. Functionally, catalyzes the transfer of an acyl group from acyl-phosphate (acyl-PO(4)) to glycerol-3-phosphate (G3P) to form lysophosphatidic acid (LPA). This enzyme utilizes acyl-phosphate as fatty acyl donor, but not acyl-CoA or acyl-ACP. The chain is Glycerol-3-phosphate acyltransferase from Bartonella henselae (strain ATCC 49882 / DSM 28221 / CCUG 30454 / Houston 1) (Rochalimaea henselae).